Here is an 82-residue protein sequence, read N- to C-terminus: MDSIISAASVIAAGLSVGLAAIGPGIGQGNAAGQAVEGIARQPEAENKIRGTLLLSLAFMEALTIYGLVVALSLLFANPFTS.

2 helical membrane-spanning segments follow: residues 4 to 24 (IISAASVIAAGLSVGLAAIGP) and 57 to 77 (LAFMEALTIYGLVVALSLLFA).

The protein belongs to the ATPase C chain family. As to quaternary structure, F-type ATPases have 2 components, F(1) - the catalytic core - and F(0) - the membrane proton channel. F(1) has five subunits: alpha(3), beta(3), gamma(1), delta(1), epsilon(1). F(0) has four main subunits: a(1), b(1), b'(1) and c(10-14). The alpha and beta chains form an alternating ring which encloses part of the gamma chain. F(1) is attached to F(0) by a central stalk formed by the gamma and epsilon chains, while a peripheral stalk is formed by the delta, b and b' chains.

It localises to the plastid. It is found in the chloroplast thylakoid membrane. F(1)F(0) ATP synthase produces ATP from ADP in the presence of a proton or sodium gradient. F-type ATPases consist of two structural domains, F(1) containing the extramembraneous catalytic core and F(0) containing the membrane proton channel, linked together by a central stalk and a peripheral stalk. During catalysis, ATP synthesis in the catalytic domain of F(1) is coupled via a rotary mechanism of the central stalk subunits to proton translocation. Functionally, key component of the F(0) channel; it plays a direct role in translocation across the membrane. A homomeric c-ring of between 10-14 subunits forms the central stalk rotor element with the F(1) delta and epsilon subunits. The chain is ATP synthase subunit c, chloroplastic from Heterosigma akashiwo (strain NIES-293 / 8280G21-1).